The primary structure comprises 457 residues: Phosphatidate cytidylyltransferase (457 aa).

6 consecutive transmembrane segments (helical) span residues 71–91 (VMISGFFITLASGHAWCIVLI), 154–174 (FIVTNHKFICYCLYLMGFVLF), 188–208 (GSLCVTHMVLLLVVFQAHLII), 214–234 (GLFWFLLPCGLVIVNDIFAYL), 255–275 (GFLGAWFFTALASIILTRILS), and 330–350 (FHALNLATFASLFAPFGGFFA).

The protein belongs to the CDS family. Homodimer. It depends on Mg(2+) as a cofactor.

The protein resides in the endoplasmic reticulum membrane. It localises to the cytoplasmic vesicle. The protein localises to the secretory vesicle. It carries out the reaction a 1,2-diacyl-sn-glycero-3-phosphate + CTP + H(+) = a CDP-1,2-diacyl-sn-glycerol + diphosphate. It functions in the pathway phospholipid metabolism; CDP-diacylglycerol biosynthesis; CDP-diacylglycerol from sn-glycerol 3-phosphate: step 3/3. Functionally, supplies CDP-diacylglycerol, which may play an important role as both a precursor to phosphoinositide biosynthesis in the plasma membrane and as a negative effector of phosphatidylinositol 4-kinase activity, thereby exerting an effect on cell proliferation via a lipid-dependent signal transduction cascade. The polypeptide is Phosphatidate cytidylyltransferase (CDS1) (Saccharomyces cerevisiae (strain ATCC 204508 / S288c) (Baker's yeast)).